The following is a 391-amino-acid chain: MAALLLLNRVSRSTSSISLHRVAGTLGFNSFNAQIHGDRISGTLFRVRSLATLAEGASHFNEMVSVNQRKYYLLGGKGGVGKTSCAASLAVKFASHGHPTIVVSTDPAHSLSDSFSQDLSGGVLKPVQGVDSPLLALEITPEIMKDEIKRQTGDKSVKNMMDSMGLGMFAGELGDLNLEDMLNAASPGIDEIAAISKVLQFMEAPEYSRFTRIVFDTAPTGHTLRLLSLPDFYDSSISKITKLKKKITAAASAFKLVFGKKEIQQKELPNELDQLKERMEKVRNVFRDVDTTEFVIVTIPTVMAINESSRLHASLRKENVPVHRLIVNQLLPQSESDCKFCSIRRKEQTRVLGLIQNDTELSGLKLIQSPLLDAEIRGVPALKFMGDLIWK.

The N-terminal 50 residues, 1–50, are a transit peptide targeting the mitochondrion; sequence MAALLLLNRVSRSTSSISLHRVAGTLGFNSFNAQIHGDRISGTLFRVRSL. An ATP-binding site is contributed by 77–84; the sequence is KGGVGKTS. The active site involves Asp106. Residue Asn328 participates in ATP binding.

It belongs to the arsA ATPase family.

The protein resides in the mitochondrion matrix. The catalysed reaction is ATP + H2O = ADP + phosphate + H(+). The polypeptide is ATPase GET3C (Arabidopsis thaliana (Mouse-ear cress)).